The chain runs to 119 residues: MAGSATIVAGLLLLVACACCIFPIDSVTIPSSCCTSFISKKIPENRVVSYQLANGSICPKAGVIFITKKGHKICTDPKLLWVQRHIQKLDAKKNQPSKGAKAVRTKFAVQRRRGNSTEV.

Positions 1–26 (MAGSATIVAGLLLLVACACCIFPIDS) are cleaved as a signal peptide. 2 disulfide bridges follow: Cys-33/Cys-58 and Cys-34/Cys-74. N-linked (GlcNAc...) asparagine glycans are attached at residues Asn-54 and Asn-115. The interval 96 to 119 (PSKGAKAVRTKFAVQRRRGNSTEV) is disordered. Basic residues predominate over residues 101–119 (KAVRTKFAVQRRRGNSTEV).

It belongs to the intercrine beta (chemokine CC) family. As to expression, highest expression in jejunum and spleen. Lower levels found in liver and lung. No expression detected in kidney, thymus, brain or testis.

The protein localises to the secreted. Its function is as follows. Chemotactic for resting T-lymphocytes, and eosinophils. Has lower chemotactic activity for neutrophils but none for monocytes and activated lymphocytes. Is a strong suppressor of colony formation by a multipotential hematopoietic progenitor cell line. Binds to CCR3. The polypeptide is C-C motif chemokine 24 (Mus musculus (Mouse)).